We begin with the raw amino-acid sequence, 169 residues long: Ribosome maturation factor RimM (169 aa).

A PRC barrel domain is found at 97 to 169 (EDEVYFKDLI…KIVVDWEYDY (73 aa)).

The protein belongs to the RimM family. As to quaternary structure, binds ribosomal protein uS19.

It localises to the cytoplasm. An accessory protein needed during the final step in the assembly of 30S ribosomal subunit, possibly for assembly of the head region. Essential for efficient processing of 16S rRNA. May be needed both before and after RbfA during the maturation of 16S rRNA. It has affinity for free ribosomal 30S subunits but not for 70S ribosomes. This Francisella tularensis subsp. tularensis (strain FSC 198) protein is Ribosome maturation factor RimM.